The chain runs to 527 residues: Phosphoenolpyruvate carboxykinase (ATP) (527 aa).

Residues arginine 54, tyrosine 190, and lysine 196 each contribute to the substrate site. ATP contacts are provided by residues lysine 196, histidine 215, and 231–239 (GLSGTGKTT). Mn(2+) is bound by residues lysine 196 and histidine 215. Residue aspartate 252 coordinates Mn(2+). ATP contacts are provided by residues glutamate 280, arginine 317, 436 to 437 (RI), and threonine 442. Arginine 317 is a substrate binding site.

The protein belongs to the phosphoenolpyruvate carboxykinase (ATP) family. Mn(2+) is required as a cofactor.

The protein resides in the cytoplasm. The catalysed reaction is oxaloacetate + ATP = phosphoenolpyruvate + ADP + CO2. The protein operates within carbohydrate biosynthesis; gluconeogenesis. Functionally, involved in the gluconeogenesis. Catalyzes the conversion of oxaloacetate (OAA) to phosphoenolpyruvate (PEP) through direct phosphoryl transfer between the nucleoside triphosphate and OAA. This Oceanobacillus iheyensis (strain DSM 14371 / CIP 107618 / JCM 11309 / KCTC 3954 / HTE831) protein is Phosphoenolpyruvate carboxykinase (ATP).